The chain runs to 542 residues: Membrane protein insertase YidC (542 aa).

The next 5 membrane-spanning stretches (helical) occupy residues 7 to 27 (LLVMGLLLVSFLIFTQWQQDF), 338 to 358 (FALLTFIQSIVTNWGLAIIGV), 417 to 437 (MGGCLPILIQMPIFIALYWTF), 455 to 475 (LSAQDPYYILPLLMGASMFLL), and 494 to 514 (FMPVMFTVFFLWFPSGLVLYW).

It belongs to the OXA1/ALB3/YidC family. Type 1 subfamily. In terms of assembly, interacts with the Sec translocase complex via SecD. Specifically interacts with transmembrane segments of nascent integral membrane proteins during membrane integration.

It is found in the cell inner membrane. Its function is as follows. Required for the insertion and/or proper folding and/or complex formation of integral membrane proteins into the membrane. Involved in integration of membrane proteins that insert both dependently and independently of the Sec translocase complex, as well as at least some lipoproteins. Aids folding of multispanning membrane proteins. The protein is Membrane protein insertase YidC of Actinobacillus pleuropneumoniae serotype 7 (strain AP76).